The chain runs to 414 residues: Glutamyl-tRNA reductase (414 aa).

Residues 49–52 (TCNR), serine 108, 113–115 (EPQ), and glutamine 119 contribute to the substrate site. Cysteine 50 serves as the catalytic Nucleophile. 188–193 (GAGQTG) is an NADP(+) binding site.

The protein belongs to the glutamyl-tRNA reductase family. Homodimer.

It carries out the reaction (S)-4-amino-5-oxopentanoate + tRNA(Glu) + NADP(+) = L-glutamyl-tRNA(Glu) + NADPH + H(+). It functions in the pathway porphyrin-containing compound metabolism; protoporphyrin-IX biosynthesis; 5-aminolevulinate from L-glutamyl-tRNA(Glu): step 1/2. Its function is as follows. Catalyzes the NADPH-dependent reduction of glutamyl-tRNA(Glu) to glutamate 1-semialdehyde (GSA). This is Glutamyl-tRNA reductase from Francisella philomiragia subsp. philomiragia (strain ATCC 25017 / CCUG 19701 / FSC 153 / O#319-036).